A 220-amino-acid chain; its full sequence is Adenylate kinase (220 aa).

10 to 15 (GAGKGT) serves as a coordination point for ATP. Residues 30–59 (STGDMLRAAVKAGSPLGVEAKGYMDAGKLV) are NMP. AMP-binding positions include Thr31, Arg36, 57–59 (KLV), 85–88 (GFPR), and Gln92. The segment at 122-159 (GRRTHAASGRTYHVKFNPPKVEGQDDVTGEPLIQRDDD) is LID. ATP is bound by residues Arg123 and 132–133 (TY). 2 residues coordinate AMP: Arg156 and Arg167. Gly206 lines the ATP pocket.

The protein belongs to the adenylate kinase family. Monomer.

The protein localises to the cytoplasm. It carries out the reaction AMP + ATP = 2 ADP. The protein operates within purine metabolism; AMP biosynthesis via salvage pathway; AMP from ADP: step 1/1. Functionally, catalyzes the reversible transfer of the terminal phosphate group between ATP and AMP. Plays an important role in cellular energy homeostasis and in adenine nucleotide metabolism. This chain is Adenylate kinase, found in Burkholderia vietnamiensis (strain G4 / LMG 22486) (Burkholderia cepacia (strain R1808)).